The sequence spans 80 residues: Clavanin-E (80 aa).

Positions 1 to 19 are cleaved as a signal peptide; it reads MKTTILILLILGLGINAKS. Positions 20–29 are excised as a propeptide; sequence LEERKSEEEK. At F52 the chain carries Phenylalanine amide. Positions 54–80 are excised as a propeptide; sequence DDQQDNGKFYGYYAEDNGKHWYDTGDQ.

The protein localises to the secreted. Functionally, has antimicrobial activity. In Styela clava (Sea squirt), this protein is Clavanin-E.